Reading from the N-terminus, the 206-residue chain is ATP phosphoribosyltransferase (206 aa).

The protein belongs to the ATP phosphoribosyltransferase family. Short subfamily. Heteromultimer composed of HisG and HisZ subunits.

It is found in the cytoplasm. The enzyme catalyses 1-(5-phospho-beta-D-ribosyl)-ATP + diphosphate = 5-phospho-alpha-D-ribose 1-diphosphate + ATP. The protein operates within amino-acid biosynthesis; L-histidine biosynthesis; L-histidine from 5-phospho-alpha-D-ribose 1-diphosphate: step 1/9. In terms of biological role, catalyzes the condensation of ATP and 5-phosphoribose 1-diphosphate to form N'-(5'-phosphoribosyl)-ATP (PR-ATP). Has a crucial role in the pathway because the rate of histidine biosynthesis seems to be controlled primarily by regulation of HisG enzymatic activity. This Brachyspira hyodysenteriae (strain ATCC 49526 / WA1) protein is ATP phosphoribosyltransferase.